The sequence spans 315 residues: tRNA-specific adenosine deaminase subunit tad3 (315 aa).

The CMP/dCMP-type deaminase domain maps to 158–299; that stretch reads KRIESILEDL…AELNHRYLAY (142 aa). Residues H211, C253, and C256 each coordinate Zn(2+).

This sequence belongs to the cytidine and deoxycytidylate deaminase family. ADAT3 subfamily. Heterodimer with Tad2.

The protein localises to the cytoplasm. Its subcellular location is the nucleus. In terms of biological role, structural subunit of tRNA-specific adenosine deaminase, which deaminates adenosine-34 (the first, also called wobble position of the anticodon) to inosine in many tRNAs. Inosine-34 allows the decoding of 3 different nucleotides at the third position of mRNA codons, as inosine is able to pair with U, C, and A. The wobble inosine tRNA modification is essential for cell cycle progression in the G1/S and G2/M transitions in fission yeast. The protein is tRNA-specific adenosine deaminase subunit tad3 (tad3) of Schizosaccharomyces pombe (strain 972 / ATCC 24843) (Fission yeast).